A 308-amino-acid polypeptide reads, in one-letter code: uncharacterized protein (308 aa).

Residues 212-242 (EADKMTIDYMRELDNLQRQYDGLVDEDKALH) adopt a coiled-coil conformation.

This is an uncharacterized protein from Ostreid herpesvirus 1 (isolate France) (OsHV-1).